The primary structure comprises 164 residues: Phosphopantetheine adenylyltransferase (164 aa).

Residue Ser-9 participates in substrate binding. ATP is bound by residues 9–10 and His-17; that span reads SF. Positions 41, 73, and 87 each coordinate substrate. ATP is bound by residues 88 to 90, Glu-98, and 123 to 129; these read GLR and YSYLSSS.

This sequence belongs to the bacterial CoaD family. As to quaternary structure, homohexamer. It depends on Mg(2+) as a cofactor.

It is found in the cytoplasm. The catalysed reaction is (R)-4'-phosphopantetheine + ATP + H(+) = 3'-dephospho-CoA + diphosphate. The protein operates within cofactor biosynthesis; coenzyme A biosynthesis; CoA from (R)-pantothenate: step 4/5. Its function is as follows. Reversibly transfers an adenylyl group from ATP to 4'-phosphopantetheine, yielding dephospho-CoA (dPCoA) and pyrophosphate. This is Phosphopantetheine adenylyltransferase from Clostridium botulinum (strain Okra / Type B1).